A 150-amino-acid polypeptide reads, in one-letter code: SsrA-binding protein (150 aa).

The tract at residues 127 to 150 is disordered; the sequence is KRETEKQRDWQREKARIMKGDAKD.

It belongs to the SmpB family.

Its subcellular location is the cytoplasm. Functionally, required for rescue of stalled ribosomes mediated by trans-translation. Binds to transfer-messenger RNA (tmRNA), required for stable association of tmRNA with ribosomes. tmRNA and SmpB together mimic tRNA shape, replacing the anticodon stem-loop with SmpB. tmRNA is encoded by the ssrA gene; the 2 termini fold to resemble tRNA(Ala) and it encodes a 'tag peptide', a short internal open reading frame. During trans-translation Ala-aminoacylated tmRNA acts like a tRNA, entering the A-site of stalled ribosomes, displacing the stalled mRNA. The ribosome then switches to translate the ORF on the tmRNA; the nascent peptide is terminated with the 'tag peptide' encoded by the tmRNA and targeted for degradation. The ribosome is freed to recommence translation, which seems to be the essential function of trans-translation. This is SsrA-binding protein from Cupriavidus necator (strain ATCC 17699 / DSM 428 / KCTC 22496 / NCIMB 10442 / H16 / Stanier 337) (Ralstonia eutropha).